The primary structure comprises 511 residues: NAD(P)H-quinone oxidoreductase subunit 2, chloroplastic (511 aa).

14 helical membrane passes run 15–35 (LLPEGIVTILLVFILLIDLTF), 39–59 (VLSWLLYIPLVGLVCSMVVLL), 78–98 (SLSIAFRFFILLSAVLCILLS), 108–128 (ALTEFFVLLLTAVIGGMLLSG), 132–152 (LIMIFLSLETLGLSSYLLTGY), 167–187 (LLIGAASSSILLYGLSLLYGL), 210–230 (FASWVALIFITVGIGFKVAAA), 244–264 (PTPVVAFLSVGSKAAGLALAT), 278–298 (WHLLFQVLASLSMILGNLIAI), 306–326 (MLGYSSVSQAGFLMIGLIAGN), 334–354 (LVYMLLYIFMNLGAFACIILF), 377–397 (VFCFSISLLSLGGIPPLAGFF), 410–430 (GFYILVFIGLFTSVISIYYYL), and 466–486 (LGIGLCVLGSVLAGVLVNPII).

This sequence belongs to the complex I subunit 2 family. NDH is composed of at least 16 different subunits, 5 of which are encoded in the nucleus.

The protein localises to the plastid. It is found in the chloroplast thylakoid membrane. It carries out the reaction a plastoquinone + NADH + (n+1) H(+)(in) = a plastoquinol + NAD(+) + n H(+)(out). It catalyses the reaction a plastoquinone + NADPH + (n+1) H(+)(in) = a plastoquinol + NADP(+) + n H(+)(out). In terms of biological role, NDH shuttles electrons from NAD(P)H:plastoquinone, via FMN and iron-sulfur (Fe-S) centers, to quinones in the photosynthetic chain and possibly in a chloroplast respiratory chain. The immediate electron acceptor for the enzyme in this species is believed to be plastoquinone. Couples the redox reaction to proton translocation, and thus conserves the redox energy in a proton gradient. The protein is NAD(P)H-quinone oxidoreductase subunit 2, chloroplastic of Chlorokybus atmophyticus (Soil alga).